A 90-amino-acid chain; its full sequence is Molybdopterin synthase sulfur carrier subunit (90 aa).

Glycine 90 is subject to 1-thioglycine; alternate. Glycine 90 carries the post-translational modification Glycyl adenylate; alternate.

Belongs to the MoaD family. MOCS2A subfamily. As to quaternary structure, heterotetramer; composed of 2 small (Mocs2A) and 2 large (Mocs2B) subunits. C-terminal thiocarboxylation occurs in 2 steps, it is first acyl-adenylated (-COAMP) via the hesA/moeB/thiF part of MOCS3, then thiocarboxylated (-COSH) via the rhodanese domain of MOCS3.

The protein resides in the cytoplasm. It participates in cofactor biosynthesis; molybdopterin biosynthesis. In terms of biological role, acts as a sulfur carrier required for molybdopterin biosynthesis. Component of the molybdopterin synthase complex that catalyzes the conversion of precursor Z into molybdopterin by mediating the incorporation of 2 sulfur atoms into precursor Z to generate a dithiolene group. In the complex, serves as sulfur donor by being thiocarboxylated (-COSH) at its C-terminus by MOCS3. After interaction with Mocs2B, the sulfur is then transferred to precursor Z to form molybdopterin. The polypeptide is Molybdopterin synthase sulfur carrier subunit (Drosophila sechellia (Fruit fly)).